The sequence spans 122 residues: Large ribosomal subunit protein uL14c (122 aa).

The protein belongs to the universal ribosomal protein uL14 family. In terms of assembly, part of the 50S ribosomal subunit.

It localises to the plastid. The protein localises to the chloroplast. In terms of biological role, binds to 23S rRNA. The polypeptide is Large ribosomal subunit protein uL14c (Nandina domestica (Heavenly bamboo)).